The primary structure comprises 771 residues: Probable glycosyltransferase STELLO1 (771 aa).

A disordered region spans residues 1 to 23; that stretch reads MLVQDRAAPSPAKPPKSQIRELP. Topologically, residues 1–50 are cytoplasmic; that stretch reads MLVQDRAAPSPAKPPKSQIRELPTHQQIRRRFSEPKNLDFSTWFSENLSR. Residues 51-71 form a helical membrane-spanning segment; sequence IAVFSLLIVTIVAFFFLYNTT. Residues 72 to 771 lie on the Lumenal side of the membrane; it reads DTASLLCFQS…EGDPLLMELV (700 aa). 2 N-linked (GlcNAc...) asparagine glycosylation sites follow: Asn242 and Asn729.

This sequence belongs to the STELLO family. As to quaternary structure, homo- and heterodimer with STL2. Interacts with CESA1, CESA3, CESA4, CESA6, CESA7 and CESA8, but not with GOT1. Expressed in cells that are expanding or producing secondary cell walls.

The protein resides in the golgi apparatus membrane. Probable glycosyltransferase regulating the assembly and trafficking of cellulose synthase complexes. The protein is Probable glycosyltransferase STELLO1 of Arabidopsis thaliana (Mouse-ear cress).